The chain runs to 233 residues: MAKNTSGRGQRDLKVKVKTARGRKLSSTRWLQRQLNDPYVKRAQAEGYRGRAAFKILELDEKYRFLVPGARVVDLGCAPGGWCQVAVKRVNALGERSDKRVGRVLGIDLQEVEPIAGAEIHQLDFLDDGADDRIKEWLGGKADVVMSDMAASSSGHKQTDHMRIIALCEAAAYLAFDVLEEGGTFVAKVLAGGAEGDLQKLLKQKFTKVANVKPPASRSDSSEKFVVATGFRG.

Residues Gly80, Trp82, Asp108, Asp124, and Asp148 each coordinate S-adenosyl-L-methionine. The Proton acceptor role is filled by Lys188.

The protein belongs to the class I-like SAM-binding methyltransferase superfamily. RNA methyltransferase RlmE family.

The protein resides in the cytoplasm. The catalysed reaction is uridine(2552) in 23S rRNA + S-adenosyl-L-methionine = 2'-O-methyluridine(2552) in 23S rRNA + S-adenosyl-L-homocysteine + H(+). Functionally, specifically methylates the uridine in position 2552 of 23S rRNA at the 2'-O position of the ribose in the fully assembled 50S ribosomal subunit. The chain is Ribosomal RNA large subunit methyltransferase E from Ruegeria pomeroyi (strain ATCC 700808 / DSM 15171 / DSS-3) (Silicibacter pomeroyi).